Here is a 629-residue protein sequence, read N- to C-terminus: Arginyl-tRNA--protein transferase 1 (629 aa).

2 disordered regions span residues 274–298 (QNNS…TNEP) and 353–405 (PDES…ITKE). Residues 282 to 295 (TTTATTATTTTTTT) show a composition bias toward low complexity. Residues 356 to 396 (SYDDYVYDGKDDDDDDDDKDEKEDDEDEDQEDDEDEDDGNN) show a composition bias toward acidic residues.

This sequence belongs to the R-transferase family.

It carries out the reaction an N-terminal L-alpha-aminoacyl-[protein] + L-arginyl-tRNA(Arg) = an N-terminal L-arginyl-L-aminoacyl-[protein] + tRNA(Arg) + H(+). In terms of biological role, involved in the post-translational conjugation of arginine to the N-terminal aspartate or glutamate of a protein. This arginylation is required for degradation of the protein via the ubiquitin pathway. Does not arginylate cysteine residues. The polypeptide is Arginyl-tRNA--protein transferase 1 (ate1) (Dictyostelium discoideum (Social amoeba)).